The chain runs to 98 residues: Nucleoid-associated protein pc0477 (98 aa).

The protein belongs to the YbaB/EbfC family. Homodimer.

The protein resides in the cytoplasm. The protein localises to the nucleoid. Functionally, binds to DNA and alters its conformation. May be involved in regulation of gene expression, nucleoid organization and DNA protection. The protein is Nucleoid-associated protein pc0477 of Protochlamydia amoebophila (strain UWE25).